The chain runs to 473 residues: MATTNYSMIFIGNLQVAVDRSSLYESSDYSSFVARECLNKDSAMKPYDIFIFEKDEHFSVEDHYTAGNSSNESNTRPSDIFLKKKLVGLNPSILQLNREKRKATLKFSGDNKDILQSTLSSSKNINLSGGLFVSREYENKYVKFGARMRCDLVNRMKDVTLAWHESVSSTSDKNVELSSVENHKIAPKADGPGNSSNESSSSPFDIFLKKKVMRLKPSFLELNREKKKAAKGFSGIVIRPGMVLLKNYLSINNQVMIVNKCRQLGLGEGGFYQPGFQDGGLLHLKMMCLGKNWDCQTRRYGEIRPIDGSVPPRIPVEFSQLVEKAIKESKSLVATNSNETKGGDEIPLLLPDICVVNFYTSTGKLGLHQVSVYDKTSFDFLKYKGGYLNTDKGESKKSLRKGLPIVSFSIGDSAEFLYGDQKDVDKADTLILESGDVLIFGERSRNVFHGVRSIRKILPPRLFFRKQIFNQVV.

357-359 is a 2-oxoglutarate binding site; that stretch reads NFY. Positions 368, 391, and 449 each coordinate Fe cation. A 2-oxoglutarate-binding site is contributed by 461–465; the sequence is RLFFR.

This sequence belongs to the alkB family. Requires Fe(2+) as cofactor. Undetectable.

It carries out the reaction an N(6)-methyl-2'-deoxyadenosine in DNA + 2-oxoglutarate + O2 = a 2'-deoxyadenosine in DNA + formaldehyde + succinate + CO2. Functionally, dioxygenase that may catalyzes DNA N(6)-methyladenine (6 mA) demethylation. Requires molecular oxygen, alpha-ketoglutarate and iron. In Arabidopsis thaliana (Mouse-ear cress), this protein is Probable DNA N(6)-methyladenine demethylase ALKBH1B.